Here is a 138-residue protein sequence, read N- to C-terminus: Acidic phospholipase A2 5 (138 aa).

An N-terminal signal peptide occupies residues Met1–Gly16. Disulfide bonds link Cys42–Cys131, Cys44–Cys60, Cys59–Cys111, Cys65–Cys138, Cys66–Cys104, Cys73–Cys97, and Cys91–Cys102. Positions 43, 45, and 47 each coordinate Ca(2+). His63 is a catalytic residue. Asp64 is a binding site for Ca(2+). Asp105 is an active-site residue.

This sequence belongs to the phospholipase A2 family. Group II subfamily. D49 sub-subfamily. It depends on Ca(2+) as a cofactor. In terms of tissue distribution, expressed by the venom gland.

It localises to the secreted. The enzyme catalyses a 1,2-diacyl-sn-glycero-3-phosphocholine + H2O = a 1-acyl-sn-glycero-3-phosphocholine + a fatty acid + H(+). In terms of biological role, PLA2 catalyzes the calcium-dependent hydrolysis of the 2-acyl groups in 3-sn-phosphoglycerides. In Echis ocellatus (Ocellated saw-scaled viper), this protein is Acidic phospholipase A2 5.